The primary structure comprises 303 residues: Beta-lactamase L2 (303 aa).

The tat-type signal signal peptide spans 1–35 (MLARRRFLQFSGAAVASSLALPLLARAAGKTAASA). Serine 83 acts as the Acyl-ester intermediate in catalysis. A substrate-binding site is contributed by 247-249 (KTG).

This sequence belongs to the class-A beta-lactamase family. Predicted to be exported by the Tat system. The position of the signal peptide cleavage has not been experimentally proven.

The catalysed reaction is a beta-lactam + H2O = a substituted beta-amino acid. This chain is Beta-lactamase L2, found in Stenotrophomonas maltophilia (Pseudomonas maltophilia).